Consider the following 571-residue polypeptide: Proline--tRNA ligase (571 aa).

Belongs to the class-II aminoacyl-tRNA synthetase family. ProS type 1 subfamily. Homodimer.

It localises to the cytoplasm. It catalyses the reaction tRNA(Pro) + L-proline + ATP = L-prolyl-tRNA(Pro) + AMP + diphosphate. In terms of biological role, catalyzes the attachment of proline to tRNA(Pro) in a two-step reaction: proline is first activated by ATP to form Pro-AMP and then transferred to the acceptor end of tRNA(Pro). As ProRS can inadvertently accommodate and process non-cognate amino acids such as alanine and cysteine, to avoid such errors it has two additional distinct editing activities against alanine. One activity is designated as 'pretransfer' editing and involves the tRNA(Pro)-independent hydrolysis of activated Ala-AMP. The other activity is designated 'posttransfer' editing and involves deacylation of mischarged Ala-tRNA(Pro). The misacylated Cys-tRNA(Pro) is not edited by ProRS. The protein is Proline--tRNA ligase of Vibrio vulnificus (strain YJ016).